The sequence spans 247 residues: 3-deoxy-manno-octulosonate cytidylyltransferase (247 aa).

Belongs to the KdsB family.

Its subcellular location is the cytoplasm. It catalyses the reaction 3-deoxy-alpha-D-manno-oct-2-ulosonate + CTP = CMP-3-deoxy-beta-D-manno-octulosonate + diphosphate. Its pathway is nucleotide-sugar biosynthesis; CMP-3-deoxy-D-manno-octulosonate biosynthesis; CMP-3-deoxy-D-manno-octulosonate from 3-deoxy-D-manno-octulosonate and CTP: step 1/1. It participates in bacterial outer membrane biogenesis; lipopolysaccharide biosynthesis. In terms of biological role, activates KDO (a required 8-carbon sugar) for incorporation into bacterial lipopolysaccharide in Gram-negative bacteria. The protein is 3-deoxy-manno-octulosonate cytidylyltransferase of Methylobacterium radiotolerans (strain ATCC 27329 / DSM 1819 / JCM 2831 / NBRC 15690 / NCIMB 10815 / 0-1).